The sequence spans 171 residues: Crossover junction endodeoxyribonuclease RuvC (171 aa).

Active-site residues include Asp7, Glu66, and Asp138. Asp7, Glu66, and Asp138 together coordinate Mg(2+).

It belongs to the RuvC family. In terms of assembly, homodimer which binds Holliday junction (HJ) DNA. The HJ becomes 2-fold symmetrical on binding to RuvC with unstacked arms; it has a different conformation from HJ DNA in complex with RuvA. In the full resolvosome a probable DNA-RuvA(4)-RuvB(12)-RuvC(2) complex forms which resolves the HJ. Mg(2+) serves as cofactor.

The protein resides in the cytoplasm. The catalysed reaction is Endonucleolytic cleavage at a junction such as a reciprocal single-stranded crossover between two homologous DNA duplexes (Holliday junction).. Functionally, the RuvA-RuvB-RuvC complex processes Holliday junction (HJ) DNA during genetic recombination and DNA repair. Endonuclease that resolves HJ intermediates. Cleaves cruciform DNA by making single-stranded nicks across the HJ at symmetrical positions within the homologous arms, yielding a 5'-phosphate and a 3'-hydroxyl group; requires a central core of homology in the junction. The consensus cleavage sequence is 5'-(A/T)TT(C/G)-3'. Cleavage occurs on the 3'-side of the TT dinucleotide at the point of strand exchange. HJ branch migration catalyzed by RuvA-RuvB allows RuvC to scan DNA until it finds its consensus sequence, where it cleaves and resolves the cruciform DNA. This is Crossover junction endodeoxyribonuclease RuvC from Thiobacillus denitrificans (strain ATCC 25259 / T1).